Reading from the N-terminus, the 326-residue chain is Putative HTH-type transcriptional regulator y4qH (326 aa).

Residues 257 to 322 form the HTH luxR-type domain; that stretch reads AVQKIPALSL…VAAIKAISLG (66 aa). Positions 281–300 form a DNA-binding region, H-T-H motif; it reads SWDIGVIMRISENTVNFHIK.

It belongs to the autoinducer-regulated transcriptional regulatory protein family.

This Sinorhizobium fredii (strain NBRC 101917 / NGR234) protein is Putative HTH-type transcriptional regulator y4qH.